Consider the following 390-residue polypeptide: Protein-glutamate methylesterase/protein-glutamine glutaminase (390 aa).

A Response regulatory domain is found at 4–121 (RALVVDDSGF…SGDMEQVKRQ (118 aa)). Asp-55 is modified (4-aspartylphosphate). The tract at residues 130-198 (GGGRGAPAGR…AAPAPERGQR (69 aa)) is disordered. Low complexity-rich tracts occupy residues 136–148 (PAGRAPRPAAPVD) and 179–193 (EAPVAPTGAPAAPAP). One can recognise a CheB-type methylesterase domain in the interval 201 to 390 (PGALRLVVIG…QVGEELAKLR (190 aa)). Catalysis depends on residues Ser-212, His-239, and Asp-335.

This sequence belongs to the CheB family. Phosphorylated by CheA. Phosphorylation of the N-terminal regulatory domain activates the methylesterase activity.

The protein resides in the cytoplasm. The enzyme catalyses [protein]-L-glutamate 5-O-methyl ester + H2O = L-glutamyl-[protein] + methanol + H(+). It carries out the reaction L-glutaminyl-[protein] + H2O = L-glutamyl-[protein] + NH4(+). Involved in chemotaxis. Part of a chemotaxis signal transduction system that modulates chemotaxis in response to various stimuli. Catalyzes the demethylation of specific methylglutamate residues introduced into the chemoreceptors (methyl-accepting chemotaxis proteins or MCP) by CheR. Also mediates the irreversible deamidation of specific glutamine residues to glutamic acid. The polypeptide is Protein-glutamate methylesterase/protein-glutamine glutaminase (Alkalilimnicola ehrlichii (strain ATCC BAA-1101 / DSM 17681 / MLHE-1)).